Here is a 172-residue protein sequence, read N- to C-terminus: MPLLDSFTVDHTRMEAPAVRVAKTMQTPKGDTITVFDLRFTAPNKDILSEKGIHTLEHLYAGFMRNHLNGSGVEIIDISPMGCRTGFYMSLIGTPAEQAVADAWVSSMEDVLKVEAQNKIPELNEYQCGTYEMHSLDEAKAIATTVLASGISVNKNDELALSDSMLKELSNH.

Histidine 54, histidine 58, and cysteine 128 together coordinate Fe cation.

It belongs to the LuxS family. In terms of assembly, homodimer. It depends on Fe cation as a cofactor.

It catalyses the reaction S-(5-deoxy-D-ribos-5-yl)-L-homocysteine = (S)-4,5-dihydroxypentane-2,3-dione + L-homocysteine. Functionally, involved in the synthesis of autoinducer 2 (AI-2) which is secreted by bacteria and is used to communicate both the cell density and the metabolic potential of the environment. The regulation of gene expression in response to changes in cell density is called quorum sensing. Catalyzes the transformation of S-ribosylhomocysteine (RHC) to homocysteine (HC) and 4,5-dihydroxy-2,3-pentadione (DPD). This Aliivibrio fischeri (strain MJ11) (Vibrio fischeri) protein is S-ribosylhomocysteine lyase.